Reading from the N-terminus, the 324-residue chain is Putative S-adenosyl-L-methionine-dependent methyltransferase MMAR_1059 (324 aa).

S-adenosyl-L-methionine contacts are provided by residues Asp138 and 167 to 168 (DL).

This sequence belongs to the UPF0677 family.

Exhibits S-adenosyl-L-methionine-dependent methyltransferase activity. In Mycobacterium marinum (strain ATCC BAA-535 / M), this protein is Putative S-adenosyl-L-methionine-dependent methyltransferase MMAR_1059.